A 98-amino-acid chain; its full sequence is MSSYKYYDLIRKPIITEKTTALSEQNKYAFYVDKFAAKLTVKKAIEEIFKVKVKKVNILNVKGKNKRFKGIIGTQINRKKAIVTLEKDNNIDFAGGIK.

It belongs to the universal ribosomal protein uL23 family. As to quaternary structure, part of the 50S ribosomal subunit. Contacts protein L29, and trigger factor when it is bound to the ribosome.

In terms of biological role, one of the early assembly proteins it binds 23S rRNA. One of the proteins that surrounds the polypeptide exit tunnel on the outside of the ribosome. Forms the main docking site for trigger factor binding to the ribosome. The polypeptide is Large ribosomal subunit protein uL23 (Rickettsia canadensis (strain McKiel)).